A 318-amino-acid chain; its full sequence is Ankyrin repeat domain-containing protein 1 (318 aa).

The stretch at 37–77 (ALEKQEDLKTTSKSLIELEEEKQSKEKQLKSELLKKKLEER) forms a coiled coil. ANK repeat units follow at residues 151–180 (YKRT…NIEF), 184–213 (LEST…AINA), 217–246 (LLST…DLNA), 250–279 (EGDT…NLNI), and 283–314 (AGKT…KNSH).

It localises to the nucleus. Its function is as follows. May act as a nuclear transcription factor that negatively regulates the expression of cardiac genes. This Xenopus laevis (African clawed frog) protein is Ankyrin repeat domain-containing protein 1 (ankrd1).